We begin with the raw amino-acid sequence, 301 residues long: Small ribosomal subunit protein uS2 (301 aa).

The disordered stretch occupies residues 282–301 (VRKQPVSENENVEAAAAEQK). The segment covering 289–301 (ENENVEAAAAEQK) has biased composition (low complexity).

It belongs to the universal ribosomal protein uS2 family.

This is Small ribosomal subunit protein uS2 from Koribacter versatilis (strain Ellin345).